We begin with the raw amino-acid sequence, 287 residues long: GPN-loop GTPase 3 (287 aa).

12 to 17 contributes to the GTP binding site; that stretch reads GAGKST. The short motif at 69-71 is the Gly-Pro-Asn (GPN)-loop; involved in dimer interface element; that stretch reads GPN. 172-175 is a binding site for GTP; sequence SKMD.

Belongs to the GPN-loop GTPase family. Heterodimers with GPN1 or GPN2. Binds to RNA polymerase II (RNAPII).

In terms of biological role, small GTPase required for proper nuclear import of RNA polymerase II and III (RNAPII and RNAPIII). May act at an RNAP assembly step prior to nuclear import. The polypeptide is GPN-loop GTPase 3 (Cryptococcus neoformans var. neoformans serotype D (strain B-3501A) (Filobasidiella neoformans)).